A 67-amino-acid polypeptide reads, in one-letter code: Large ribosomal subunit protein uL29 (67 aa).

It belongs to the universal ribosomal protein uL29 family.

The protein is Large ribosomal subunit protein uL29 of Rhizorhabdus wittichii (strain DSM 6014 / CCUG 31198 / JCM 15750 / NBRC 105917 / EY 4224 / RW1) (Sphingomonas wittichii).